Consider the following 231-residue polypeptide: Sugar fermentation stimulation protein homolog (231 aa).

It belongs to the SfsA family.

The polypeptide is Sugar fermentation stimulation protein homolog (Geotalea daltonii (strain DSM 22248 / JCM 15807 / FRC-32) (Geobacter daltonii)).